Here is a 559-residue protein sequence, read N- to C-terminus: Chaperonin GroEL 1 (559 aa).

ATP-binding positions include 29-32, 86-90, glycine 413, 476-478, and aspartate 492; these read TIGP, DGTTT, and NAL. The tract at residues 521 to 541 is disordered; that stretch reads KPEPPAPAPAGDGDPMGGMGG.

Belongs to the chaperonin (HSP60) family. Forms a cylinder of 14 subunits composed of two heptameric rings stacked back-to-back. Interacts with the co-chaperonin GroES.

The protein resides in the cytoplasm. It carries out the reaction ATP + H2O + a folded polypeptide = ADP + phosphate + an unfolded polypeptide.. Together with its co-chaperonin GroES, plays an essential role in assisting protein folding. The GroEL-GroES system forms a nano-cage that allows encapsulation of the non-native substrate proteins and provides a physical environment optimized to promote and accelerate protein folding. The protein is Chaperonin GroEL 1 of Synechococcus sp. (strain CC9605).